The primary structure comprises 503 residues: MAKDDKRLTGLFGHPVSDRENSMTAGPRGPLLMQDAYFLEQMSHFDREVIPERRMHAKGSGAFGTFTVTNDITKYTNAKIFSEVGKQTEMFARFSTVAGERGAADLERDIRGFALKFYTEDGNWDLVGNNTPVFFFRDSKLFVSLNRAVKRDPRTNMRSPQNNWDFWTGVPEALHQVTILMSDRGMPKDFRHMHGFGSHTYSMYNDEGERVWVKYHFRTQQGIENYTDDEAAEIVGQDRESSQRDLYDAIENGDYPKWKMYIQVMTEEQAKNHPDNPFDLTKVWYKGDYPLIEVGEFELNRNPENYFMDVEQAAFAPTNIIPGLDFSPDKMLQGRLFSYGDAQRYRLGVNHWQIPVNQPKGVGIENMCPFSRDGQMRFLDGNQGGGPHYYPNNKGVYQSQPEYKKPAFPVDGDGYEYNQRQDDDNYFEQPGKLFRLQSDDAKERIFTNTANAMDGVSEDVKHRHIRHCYKADPEYGKGVAKALEIDINDVDLEGTNDETYENF.

The tract at residues 1–26 (MAKDDKRLTGLFGHPVSDRENSMTAG) is disordered. Residues His56 and Asn129 contribute to the active site. Tyr339 serves as a coordination point for heme.

This sequence belongs to the catalase family. Homodimer. It depends on heme as a cofactor.

The catalysed reaction is 2 H2O2 = O2 + 2 H2O. Its function is as follows. Decomposes hydrogen peroxide into water and oxygen; serves to protect cells from the toxic effects of hydrogen peroxide. The chain is Catalase (katA) from Staphylococcus haemolyticus (strain JCSC1435).